Consider the following 268-residue polypeptide: Glutamate racemase (268 aa).

Substrate-binding positions include 9–10 (DS) and 41–42 (YG). Cys73 (proton donor/acceptor) is an active-site residue. 74-75 (NS) lines the substrate pocket. Cys183 functions as the Proton donor/acceptor in the catalytic mechanism. 184 to 185 (TH) provides a ligand contact to substrate.

This sequence belongs to the aspartate/glutamate racemases family.

It catalyses the reaction L-glutamate = D-glutamate. Its pathway is cell wall biogenesis; peptidoglycan biosynthesis. In terms of biological role, provides the (R)-glutamate required for cell wall biosynthesis. In Shewanella pealeana (strain ATCC 700345 / ANG-SQ1), this protein is Glutamate racemase.